Reading from the N-terminus, the 360-residue chain is WAT1-related protein At3g28070 (360 aa).

Transmembrane regions (helical) follow at residues 15-35 (AVFL…STLF), 45-65 (IYPF…PSLF), 84-104 (IGLL…GIEY), 108-128 (TLAS…AIIF), 140-160 (SLAK…VIFY), 190-210 (WLIG…SFIL), 224-244 (VSFL…LVVE), 248-268 (PSVW…MAIV), 286-306 (LYLA…GAIF), and 311-331 (LYLG…AVMW). Residues 30–158 (GISTLFKFAT…LSLIGALVVI (129 aa)) form the EamA domain.

Belongs to the drug/metabolite transporter (DMT) superfamily. Plant drug/metabolite exporter (P-DME) (TC 2.A.7.4) family.

The protein resides in the membrane. The polypeptide is WAT1-related protein At3g28070 (Arabidopsis thaliana (Mouse-ear cress)).